The primary structure comprises 158 residues: Urease accessory protein UreE (158 aa).

The protein belongs to the UreE family.

Its subcellular location is the cytoplasm. Involved in urease metallocenter assembly. Binds nickel. Probably functions as a nickel donor during metallocenter assembly. This is Urease accessory protein UreE from Klebsiella pneumoniae (strain 342).